Here is a 76-residue protein sequence, read N- to C-terminus: Sea anemone sodium channel inhibitor type I (76 aa).

The N-terminal stretch at 1–19 (MNRMLIIFVVVTVFGLASG) is a signal peptide. Positions 20 to 30 (LGPNMPAPDLA) are excised as a propeptide. 3 disulfide bridges follow: Cys-37/Cys-72, Cys-39/Cys-60, and Cys-53/Cys-73.

This sequence belongs to the sea anemone sodium channel inhibitory toxin family. Type I subfamily. Expressed in acontia, a specialised envenomation structure laden with batteries of venom-containing nematocysts found only in the superfamily Metridioidea.

It is found in the secreted. The protein resides in the nematocyst. In terms of biological role, may affect sodium channels (Nav). In Calliactis polypus (Hermit crab anemone), this protein is Sea anemone sodium channel inhibitor type I.